Here is a 363-residue protein sequence, read N- to C-terminus: Fructose-1,6-bisphosphate aldolase/phosphatase (363 aa).

Aspartate 11 acts as the Proton acceptor; for FBP phosphatase activity in catalysis. Mg(2+) is bound by residues aspartate 11, histidine 18, aspartate 51, and aspartate 52. Histidine 18 serves as a coordination point for beta-D-fructose 1,6-bisphosphate. Histidine 18 is a dihydroxyacetone phosphate binding site. Position 89 (tyrosine 89) interacts with beta-D-fructose 1,6-bisphosphate. Residue glutamine 93 participates in Mg(2+) binding. 102–103 (GN) contributes to the beta-D-fructose 1,6-bisphosphate binding site. Position 130 (aspartate 130) interacts with Mg(2+). Lysine 131 lines the beta-D-fructose 1,6-bisphosphate pocket. Lysine 131 lines the dihydroxyacetone phosphate pocket. Catalysis depends on tyrosine 230, which acts as the Proton donor/acceptor; for FBP aldolase activity. Residues lysine 233, aspartate 234, and aspartate 235 each coordinate Mg(2+). Lysine 233 functions as the Schiff-base intermediate with DHAP; for FBP aldolase activity in the catalytic mechanism. Beta-D-fructose 1,6-bisphosphate contacts are provided by residues 243 to 244 (QK), arginine 267, and tyrosine 348. Dihydroxyacetone phosphate is bound at residue arginine 267.

It belongs to the FBP aldolase/phosphatase family. In terms of assembly, homooctamer; dimer of tetramers. Mg(2+) is required as a cofactor.

The catalysed reaction is beta-D-fructose 1,6-bisphosphate + H2O = beta-D-fructose 6-phosphate + phosphate. It carries out the reaction beta-D-fructose 1,6-bisphosphate = D-glyceraldehyde 3-phosphate + dihydroxyacetone phosphate. It functions in the pathway carbohydrate biosynthesis; gluconeogenesis. In terms of biological role, catalyzes two subsequent steps in gluconeogenesis: the aldol condensation of dihydroxyacetone phosphate (DHAP) and glyceraldehyde-3-phosphate (GA3P) to fructose-1,6-bisphosphate (FBP), and the dephosphorylation of FBP to fructose-6-phosphate (F6P). This Thermus thermophilus (strain ATCC BAA-163 / DSM 7039 / HB27) protein is Fructose-1,6-bisphosphate aldolase/phosphatase.